Here is a 902-residue protein sequence, read N- to C-terminus: Desmocollin-2 (902 aa).

The signal sequence occupies residues 1-27 (MAAVGSMRSGSPAFGLGHLLTLAILAL). The propeptide occupies 28 to 135 (ASDACKEVVL…TEKVLSRAKR (108 aa)). 5 Cadherin domains span residues 136–243 (RWAP…YPIF), 244–355 (TQKL…LPTF), 356–471 (TRTT…GPEC), 472–579 (IPPM…FIPK), and 580–694 (QTVV…RLGP). Residues 136–694 (RWAPIPCSML…TGYADVRLGP (559 aa)) lie on the Extracellular side of the membrane. Residue N166 is glycosylated (N-linked (GlcNAc...) asparagine). N-linked (GlcNAc...) asparagine glycans are attached at residues N392, N546, and N629. The helical transmembrane segment at 695-715 (WAILAILLGIALLFCILFTLV) threads the bilayer. The Cytoplasmic segment spans residues 716-902 (CSVSRASKQQ…RTLAEVCAKR (187 aa)). Residues S865, S869, and S874 each carry the phosphoserine modification.

As to quaternary structure, interacts with DSP, PKP2 and JUP. Interacts with DSG3; the interaction may limit the interaction of DSC3 with p38MAPK family members and therefore repress p38MAPK signaling activation. As to expression, expressed in intestinal epithelial cells (at protein level). Expressed in the heart. Expressed in tongue, bladder, stomach, liver, kidney, and lung.

The protein localises to the cell membrane. Its subcellular location is the cell junction. It is found in the desmosome. A component of desmosome cell-cell junctions which are required for positive regulation of cellular adhesion. Promotes timely incorporation of DSG2 into desmosome intercellular junctions and promotes interaction of desmosome cell junctions with intermediate filament cytokeratin, via modulation of DSP phosphorylation. Plays an important role in desmosome-mediated maintenance of intestinal epithelial cell intercellular adhesion strength and barrier function. Positively regulates wound healing of intestinal mucosa via promotion of epithelial cell migration, and also plays a role in mechanotransduction of force between intestinal epithelial cells and extracellular matrix. May contribute to epidermal cell positioning (stratification) by mediating differential adhesiveness between cells that express different isoforms. May promote p38MAPK signaling activation that facilitates keratinocyte migration. The sequence is that of Desmocollin-2 (Dsc2) from Mus musculus (Mouse).